Reading from the N-terminus, the 463-residue chain is MSPPRKLHIKSYGCQMNVYDAQRMVDALAPEGFVETANVDDADLVILNTCHIREKASEKVYSELGRLRVARDEAANHGRRMQIAVAGCVAQAEGEEIIRRAPVVDVVVGPQSYHNLPQLLAKAEQHGRALETEFPIEDKFGVLPQPAPDAIRARGISAFVTVQEGCDKFCTFCVVPYTRGAEMSRPVVAIVEDVKRLAENGVREVTLIGQNVNAYHGDGPDGRAWSLGRLVRRLAEIPGIVRLRYSTSHPNDVDDDLLAAHRDLPALMPFVHLPVQSGSDRILAAMNRKHTADDYRRVIDRFRSASETIAFSSDFIVGFPGETERDFSATLALVAQIGYAGAYSFKYSPRPGTPAADMVEMVPAAVMDERLEQLQQLIDQQQSAFNKAAIGRTVEVLFERAGRKPGQIVGRTAYLQPAHVMAPDSIIGKVLPVRVDSLERYSLLGELASATSRPADAMAATGA.

One can recognise an MTTase N-terminal domain in the interval Arg5–Gln125. 6 residues coordinate [4Fe-4S] cluster: Cys14, Cys50, Cys88, Cys166, Cys170, and Cys173. Positions Arg152 to Ala384 constitute a Radical SAM core domain. Residues Lys387–Ser449 enclose the TRAM domain.

Belongs to the methylthiotransferase family. MiaB subfamily. Monomer. [4Fe-4S] cluster serves as cofactor.

The protein localises to the cytoplasm. The enzyme catalyses N(6)-dimethylallyladenosine(37) in tRNA + (sulfur carrier)-SH + AH2 + 2 S-adenosyl-L-methionine = 2-methylsulfanyl-N(6)-dimethylallyladenosine(37) in tRNA + (sulfur carrier)-H + 5'-deoxyadenosine + L-methionine + A + S-adenosyl-L-homocysteine + 2 H(+). Functionally, catalyzes the methylthiolation of N6-(dimethylallyl)adenosine (i(6)A), leading to the formation of 2-methylthio-N6-(dimethylallyl)adenosine (ms(2)i(6)A) at position 37 in tRNAs that read codons beginning with uridine. The sequence is that of tRNA-2-methylthio-N(6)-dimethylallyladenosine synthase from Rhodopseudomonas palustris (strain TIE-1).